Here is an 814-residue protein sequence, read N- to C-terminus: DNA replication licensing factor Mcm6 (814 aa).

The C4-type zinc finger occupies C152 to C179. The MCM domain occupies L339–I545. 6 residues coordinate ATP: S392, T393, A394, K395, S396, and N497. The Arginine finger signature appears at S521–D524. The ADP site is built by R612 and E615. Positions D656–A696 are disordered. A compositionally biased stretch (acidic residues) spans L659–E679.

This sequence belongs to the MCM family. In terms of assembly, component of the Mcm2-7 complex. The complex forms a toroidal hexameric ring with the proposed subunit order Mcm2-Mcm6-Mcm4-Mcm7-Mcm3-Mcm5 (By simililarity). The heterodimers of Mcm4/Mcm6 and Mcm3/Mcm5 interact with Mcm2 and Mcm7.

It localises to the nucleus. The enzyme catalyses ATP + H2O = ADP + phosphate + H(+). Functionally, acts as a component of the MCM2-7 complex (MCM complex) which is the replicative helicase essential for 'once per cell cycle' DNA replication initiation and elongation in eukaryotic cells. Core component of CDC45-MCM-GINS (CMG) helicase, the molecular machine that unwinds template DNA during replication, and around which the replisome is built. The active ATPase sites in the MCM2-7 ring are formed through the interaction surfaces of two neighboring subunits such that a critical structure of a conserved arginine finger motif is provided in trans relative to the ATP-binding site of the Walker A box of the adjacent subunit. The six ATPase active sites, however, are likely to contribute differentially to the complex helicase activity. The sequence is that of DNA replication licensing factor Mcm6 from Anopheles gambiae (African malaria mosquito).